A 151-amino-acid chain; its full sequence is Macrodomain Ter protein (151 aa).

Belongs to the MatP family. Homodimer.

It is found in the cytoplasm. Functionally, required for spatial organization of the terminus region of the chromosome (Ter macrodomain) during the cell cycle. Prevents early segregation of duplicated Ter macrodomains during cell division. Binds specifically to matS, which is a 13 bp signature motif repeated within the Ter macrodomain. In Yersinia enterocolitica serotype O:8 / biotype 1B (strain NCTC 13174 / 8081), this protein is Macrodomain Ter protein.